The following is a 484-amino-acid chain: Protein nucleotidyltransferase YdiU (484 aa).

Residues Gly81, Gly83, Arg84, Lys103, Asp115, Gly116, Arg166, and Arg173 each contribute to the ATP site. Asp244 functions as the Proton acceptor in the catalytic mechanism. Positions 245 and 254 each coordinate Mg(2+). An ATP-binding site is contributed by Asp254.

This sequence belongs to the SELO family. Mg(2+) serves as cofactor. Mn(2+) is required as a cofactor.

It catalyses the reaction L-seryl-[protein] + ATP = 3-O-(5'-adenylyl)-L-seryl-[protein] + diphosphate. The catalysed reaction is L-threonyl-[protein] + ATP = 3-O-(5'-adenylyl)-L-threonyl-[protein] + diphosphate. The enzyme catalyses L-tyrosyl-[protein] + ATP = O-(5'-adenylyl)-L-tyrosyl-[protein] + diphosphate. It carries out the reaction L-histidyl-[protein] + UTP = N(tele)-(5'-uridylyl)-L-histidyl-[protein] + diphosphate. It catalyses the reaction L-seryl-[protein] + UTP = O-(5'-uridylyl)-L-seryl-[protein] + diphosphate. The catalysed reaction is L-tyrosyl-[protein] + UTP = O-(5'-uridylyl)-L-tyrosyl-[protein] + diphosphate. Nucleotidyltransferase involved in the post-translational modification of proteins. It can catalyze the addition of adenosine monophosphate (AMP) or uridine monophosphate (UMP) to a protein, resulting in modifications known as AMPylation and UMPylation. This Shewanella baltica (strain OS185) protein is Protein nucleotidyltransferase YdiU.